Here is a 725-residue protein sequence, read N- to C-terminus: Fatty acid oxidation complex subunit alpha (725 aa).

The segment at 1–189 (MIYQGENLSV…ALGMIDGVVS (189 aa)) is enoyl-CoA hydratase/isomerase. Residue D296 participates in substrate binding. The 3-hydroxyacyl-CoA dehydrogenase stretch occupies residues 311–725 (EPVTSAAVLG…APQSLSAPSA (415 aa)). NAD(+) contacts are provided by residues M324, D343, 400-402 (VVE), K407, and S429. The For 3-hydroxyacyl-CoA dehydrogenase activity role is filled by H450. Residue N453 coordinates NAD(+). Positions 500 and 660 each coordinate substrate.

In the N-terminal section; belongs to the enoyl-CoA hydratase/isomerase family. The protein in the C-terminal section; belongs to the 3-hydroxyacyl-CoA dehydrogenase family. As to quaternary structure, heterotetramer of two alpha chains (FadB) and two beta chains (FadA).

It catalyses the reaction a (3S)-3-hydroxyacyl-CoA + NAD(+) = a 3-oxoacyl-CoA + NADH + H(+). The enzyme catalyses a (3S)-3-hydroxyacyl-CoA = a (2E)-enoyl-CoA + H2O. It carries out the reaction a 4-saturated-(3S)-3-hydroxyacyl-CoA = a (3E)-enoyl-CoA + H2O. The catalysed reaction is (3S)-3-hydroxybutanoyl-CoA = (3R)-3-hydroxybutanoyl-CoA. It catalyses the reaction a (3Z)-enoyl-CoA = a 4-saturated (2E)-enoyl-CoA. The enzyme catalyses a (3E)-enoyl-CoA = a 4-saturated (2E)-enoyl-CoA. Its pathway is lipid metabolism; fatty acid beta-oxidation. Functionally, involved in the aerobic and anaerobic degradation of long-chain fatty acids via beta-oxidation cycle. Catalyzes the formation of 3-oxoacyl-CoA from enoyl-CoA via L-3-hydroxyacyl-CoA. It can also use D-3-hydroxyacyl-CoA and cis-3-enoyl-CoA as substrate. The chain is Fatty acid oxidation complex subunit alpha from Aliivibrio fischeri (strain MJ11) (Vibrio fischeri).